A 745-amino-acid chain; its full sequence is MAPPPNTYSESWWGGKEERGTPVVVKMDNPYSLVEIDGPGMAAPSEKARGKNAKQLTWVLLLRAHRAVGCVAWLAAGFWAVLGAVNRRVRRSRDADAEPDAEASGRGRAMLRFLRGFLLLSLAMLAFETVAHLKGWHFPRSAAGLPEKYLRRLPEHLQHLPEHLRRHLPEHLRMPEKEEIEGWLHRAYVAWLAFRIDYIAWAIQKLSGFCIALFMVQSVDRLVLCLGCFWIKLRGIKPVADTSISNDDIEATAGDGGGYFPMVLIQMPMCNEKEVYETSISHVCQIDWPRERMLVQVLDDSDDETCQMLIKAEVTKWSQRGVNIIYRHRLNRTGYKAGNLKSAMSCDYVRDYEFVAIFDADFQPNPDFLKLTVPHFKGNPELGLVQARWSFVNKDENLLTRLQNINLCFHFEVEQQVNGVYLSFFGFNGTAGVWRIKALEDSGGWMERTTVEDMDIAVRAHLNGWKFIFLNDVKVLCELPESYQAYRKQQHRWHSGPMQLFRLCLPAVFKSKISTWKKANLVMLFFLLRKLILPFYSFTLFCVILPLTMFVPEAELPIWVICYVPVIMSVLNILPAPKSFPFVIPYLLFENTMSVTKFNAMVSGLFQLGSSYEWVVTKKAGRTSSESDILALAEAADADARPPPAKLHRGVSEGGLKEWAKLHKEQEDATAAAAAAAAPGTPVKKSKAAKAPNRIFKKELALAFLLLTAATRSLLSAQGLHFYFLLFQGVTFLAVGLDLIGEQVS.

Helical transmembrane passes span 116–136 (GFLL…LKGW) and 196–216 (IDYI…LFMV). Asp-300 is a catalytic residue. Substrate is bound by residues Asp-359 and Asp-361. Residue Asp-453 is part of the active site. A run of 4 helical transmembrane segments spans residues 531-551 (LILP…TMFV), 556-576 (LPIW…ILPA), 695-715 (IFKK…RSLL), and 720-740 (LHFY…LDLI).

This sequence belongs to the glycosyltransferase 2 family. Plant cellulose synthase-like C subfamily.

The protein localises to the golgi apparatus membrane. Functionally, probable beta-1,4-glucan synthase rather involved in the synthesis of the xyloglucan backbone than cellulose. Seems to work simultaneously with xyloglucan 6-xylosyltransferase. Xyloglucan is a noncellulosic polysaccharides of plant cell wall and consists of a glucan backbone substituted by xylose, galactose and fucose. The chain is Probable xyloglucan glycosyltransferase 3 (CSLC3) from Oryza sativa subsp. japonica (Rice).